We begin with the raw amino-acid sequence, 489 residues long: Siroheme synthase (489 aa).

Residues 1–203 (MDFFPVFMRL…GREDAARETL (203 aa)) are precorrin-2 dehydrogenase /sirohydrochlorin ferrochelatase. NAD(+) contacts are provided by residues 22–23 (PV) and 43–44 (PA). The segment at 218 to 489 (GEVFLVGAGP…ARSSTEGAEA (272 aa)) is uroporphyrinogen-III C-methyltransferase. Pro-227 serves as a coordination point for S-adenosyl-L-methionine. The Proton acceptor role is filled by Asp-250. Catalysis depends on Lys-272, which acts as the Proton donor. S-adenosyl-L-methionine contacts are provided by residues 303 to 305 (GGD), Ile-308, 333 to 334 (TA), Met-385, and Gly-414.

In the N-terminal section; belongs to the precorrin-2 dehydrogenase / sirohydrochlorin ferrochelatase family. This sequence in the C-terminal section; belongs to the precorrin methyltransferase family.

The enzyme catalyses uroporphyrinogen III + 2 S-adenosyl-L-methionine = precorrin-2 + 2 S-adenosyl-L-homocysteine + H(+). It carries out the reaction precorrin-2 + NAD(+) = sirohydrochlorin + NADH + 2 H(+). The catalysed reaction is siroheme + 2 H(+) = sirohydrochlorin + Fe(2+). Its pathway is cofactor biosynthesis; adenosylcobalamin biosynthesis; precorrin-2 from uroporphyrinogen III: step 1/1. The protein operates within cofactor biosynthesis; adenosylcobalamin biosynthesis; sirohydrochlorin from precorrin-2: step 1/1. It participates in porphyrin-containing compound metabolism; siroheme biosynthesis; precorrin-2 from uroporphyrinogen III: step 1/1. It functions in the pathway porphyrin-containing compound metabolism; siroheme biosynthesis; siroheme from sirohydrochlorin: step 1/1. Its pathway is porphyrin-containing compound metabolism; siroheme biosynthesis; sirohydrochlorin from precorrin-2: step 1/1. Its function is as follows. Multifunctional enzyme that catalyzes the SAM-dependent methylations of uroporphyrinogen III at position C-2 and C-7 to form precorrin-2 via precorrin-1. Then it catalyzes the NAD-dependent ring dehydrogenation of precorrin-2 to yield sirohydrochlorin. Finally, it catalyzes the ferrochelation of sirohydrochlorin to yield siroheme. In Thioalkalivibrio sulfidiphilus (strain HL-EbGR7), this protein is Siroheme synthase.